We begin with the raw amino-acid sequence, 410 residues long: Arginine biosynthesis bifunctional protein ArgJ (410 aa).

Residues Thr160, Lys186, Thr197, Glu283, Asn405, and Thr410 each contribute to the substrate site. Catalysis depends on Thr197, which acts as the Nucleophile.

This sequence belongs to the ArgJ family. As to quaternary structure, heterotetramer of two alpha and two beta chains.

The protein resides in the cytoplasm. The catalysed reaction is N(2)-acetyl-L-ornithine + L-glutamate = N-acetyl-L-glutamate + L-ornithine. The enzyme catalyses L-glutamate + acetyl-CoA = N-acetyl-L-glutamate + CoA + H(+). It participates in amino-acid biosynthesis; L-arginine biosynthesis; L-ornithine and N-acetyl-L-glutamate from L-glutamate and N(2)-acetyl-L-ornithine (cyclic): step 1/1. It functions in the pathway amino-acid biosynthesis; L-arginine biosynthesis; N(2)-acetyl-L-ornithine from L-glutamate: step 1/4. Competitively inhibited by L-ornithine. In terms of biological role, catalyzes two activities which are involved in the cyclic version of arginine biosynthesis: the synthesis of N-acetylglutamate from glutamate and acetyl-CoA as the acetyl donor, and of ornithine by transacetylation between N(2)-acetylornithine and glutamate. The protein is Arginine biosynthesis bifunctional protein ArgJ of Geobacillus stearothermophilus (Bacillus stearothermophilus).